We begin with the raw amino-acid sequence, 391 residues long: Arginine biosynthesis bifunctional protein ArgJ (391 aa).

Positions 149, 172, 183, 263, 386, and 391 each coordinate substrate. Residue T183 is the Nucleophile of the active site.

This sequence belongs to the ArgJ family. Heterotetramer of two alpha and two beta chains.

Its subcellular location is the cytoplasm. It carries out the reaction N(2)-acetyl-L-ornithine + L-glutamate = N-acetyl-L-glutamate + L-ornithine. The enzyme catalyses L-glutamate + acetyl-CoA = N-acetyl-L-glutamate + CoA + H(+). Its pathway is amino-acid biosynthesis; L-arginine biosynthesis; L-ornithine and N-acetyl-L-glutamate from L-glutamate and N(2)-acetyl-L-ornithine (cyclic): step 1/1. It participates in amino-acid biosynthesis; L-arginine biosynthesis; N(2)-acetyl-L-ornithine from L-glutamate: step 1/4. In terms of biological role, catalyzes two activities which are involved in the cyclic version of arginine biosynthesis: the synthesis of N-acetylglutamate from glutamate and acetyl-CoA as the acetyl donor, and of ornithine by transacetylation between N(2)-acetylornithine and glutamate. This is Arginine biosynthesis bifunctional protein ArgJ from Bifidobacterium longum (strain NCC 2705).